Consider the following 701-residue polypeptide: Centrosomal protein of 83 kDa (701 aa).

A compositionally biased stretch (polar residues) spans 1 to 14; sequence MVVSTFTDMDTFPN. The tract at residues 1-23 is disordered; the sequence is MVVSTFTDMDTFPNNFPPGGDSG. Coiled coils occupy residues 40-634 and 665-698; these read LRCE…SLIL and HMQE…ELGS. A Phosphoserine modification is found at Ser698.

Belongs to the CEP83 family. In terms of assembly, interacts with CEP164 and IFT20.

It localises to the cytoplasm. The protein localises to the cytoskeleton. It is found in the microtubule organizing center. The protein resides in the centrosome. Its subcellular location is the centriole. Its function is as follows. Component of the distal appendage region of the centriole involved in the initiation of primary cilium assembly. May collaborate with IFT20 in the trafficking of ciliary membrane proteins from the Golgi complex to the cilium during the initiation of primary cilium assembly. The polypeptide is Centrosomal protein of 83 kDa (CEP83) (Homo sapiens (Human)).